A 355-amino-acid chain; its full sequence is D-alanine--D-alanine ligase (355 aa).

An ATP-grasp domain is found at 143 to 350; the sequence is KKIFSHLEIP…IDQLVAKLVD (208 aa). ATP is bound at residue 178–233; the sequence is IEKLKLPVFVKPANSGSSLGISKAKTRSEIIKALQKAWEIDSRIVIEEGLDVRELE. Residues Asp-303, Glu-317, and Asn-319 each coordinate Mg(2+).

Belongs to the D-alanine--D-alanine ligase family. The cofactor is Mg(2+). Mn(2+) is required as a cofactor.

It is found in the cytoplasm. It catalyses the reaction 2 D-alanine + ATP = D-alanyl-D-alanine + ADP + phosphate + H(+). The protein operates within cell wall biogenesis; peptidoglycan biosynthesis. Its function is as follows. Cell wall formation. This chain is D-alanine--D-alanine ligase, found in Prochlorococcus marinus subsp. pastoris (strain CCMP1986 / NIES-2087 / MED4).